The sequence spans 201 residues: Endoribonuclease YbeY (201 aa).

Zn(2+)-binding residues include His156, His160, and His166.

The protein belongs to the endoribonuclease YbeY family. It depends on Zn(2+) as a cofactor.

The protein localises to the cytoplasm. In terms of biological role, single strand-specific metallo-endoribonuclease involved in late-stage 70S ribosome quality control and in maturation of the 3' terminus of the 16S rRNA. This chain is Endoribonuclease YbeY, found in Cupriavidus pinatubonensis (strain JMP 134 / LMG 1197) (Cupriavidus necator (strain JMP 134)).